Here is a 312-residue protein sequence, read N- to C-terminus: Acetyl-coenzyme A carboxylase carboxyl transferase subunit alpha (312 aa).

The region spanning 36–286 is the CoA carboxyltransferase C-terminal domain; the sequence is NLEKEISKTY…ADYVKKSLNE (251 aa).

The protein belongs to the AccA family. In terms of assembly, acetyl-CoA carboxylase is a heterohexamer composed of biotin carboxyl carrier protein (AccB), biotin carboxylase (AccC) and two subunits each of ACCase subunit alpha (AccA) and ACCase subunit beta (AccD).

It localises to the cytoplasm. It carries out the reaction N(6)-carboxybiotinyl-L-lysyl-[protein] + acetyl-CoA = N(6)-biotinyl-L-lysyl-[protein] + malonyl-CoA. The protein operates within lipid metabolism; malonyl-CoA biosynthesis; malonyl-CoA from acetyl-CoA: step 1/1. Component of the acetyl coenzyme A carboxylase (ACC) complex. First, biotin carboxylase catalyzes the carboxylation of biotin on its carrier protein (BCCP) and then the CO(2) group is transferred by the carboxyltransferase to acetyl-CoA to form malonyl-CoA. This is Acetyl-coenzyme A carboxylase carboxyl transferase subunit alpha from Campylobacter jejuni subsp. jejuni serotype O:6 (strain 81116 / NCTC 11828).